We begin with the raw amino-acid sequence, 1153 residues long: MFNQEQGTDYPVLNKKKLESLANLKLAMGGHEYPTDDLTQQGLKLAGPLLEEVEESEVNHTTAPIDARLQTFLNSYFAECGEEVPKIPDDTFILDREGLGRVLSFPPHKQEFFCETMKSYKIKQGVLHNPAKDKRTTVGVFHICQSDVPVPADKIECPKIAFLRMLKAAFYGAPDDHLIIPYTAECKEPTRSWVSLYMRPVVVPGVKGVKGFEHEKATEMHFFVPGNMVSCLDFVESVFGNAGNPRLSKNDAALDPLGWTGHSGMAILAPHLTRMTKKECGLPHISQATERQKRERMCWEKEDELYNDGKTFKMYCRDASGVICTIIADNYFGYCKKEVKTQISYSANLYGFAEEEHAGGAIARPSYDLGESCDASKYAEGYKFSEMVEKNKHSIIVKEEGYAVDKKYPEGIIYVPEDSVFTIEDASIKFNHNGKEESILLTPKVNYVLPNGYTIILHDTMTSRRWTLRGILPQYTLCHKPCTVSGGGKSEISKSIRDAVIEGSVFVNNKEEDFKAVQKVFDHDFSKRYANGEVKPIHILDPNVTLGTVVELLTPSHLFTKEHNDYISSISPLIVELVMTIKSLYREDWKGDWQSRITVDKINGNEGNELKYRGANLSSQYLRVGFERDETTWRVFQLRKDFFPAAKLQMEDDITASVIVPTKLLKTPINNMQKKACKIVKNCELRLFQRPDDAVFRGFDKQTEYDFSIPGHFISNYQPMTREEAKDFTKDVVRLYQYTEPMRKCLQDFVAGKDEAKYIVSSSYTRLVPEGDKLVGSKNPRYLQRRPDMLDPEYTYMTFKAIQLYRKISDEEPLYTPVDAVLSGRRNNPPQVAKNGMKLRPLSVFAPLHYFELPELLMECITSMTGASPSMFGAGSEGALTKGPFNSLPAVVDLNNYLLGMICCGYSGFVSSASYCGPHYKVAHDISLLIPEIWSKMIRYEQEPKYLIEHGYLEPCPDVTYNGKTYSGKRLGYRITTAFANHFLRTLFSMPNSVMPEDFLKPELQDLAIYADSYEYMSQTDKGIAMNYVKDGTVEGACPPLKALIYIMANGEYNGMTRESKEFREMFDPEVVLNSEWYKERLVTRQKLEVAKLNKDLAYLNKTIAEKPRLAETLNKQIAAVKEELQYVSSEEYLHDINGSIGTDPYPYKCMKH.

A coiled-coil region spans residues 1085-1131 (RQKLEVAKLNKDLAYLNKTIAEKPRLAETLNKQIAAVKEELQYVSSE).

Belongs to the PPi-type phosphoenolpyruvate carboxykinase family. In terms of assembly, monomer and trimer; forms heterotrimers with PEPCK1 and PEPCK2.

The protein localises to the cytoplasm. The protein resides in the cytosol. It catalyses the reaction oxaloacetate + diphosphate = phosphoenolpyruvate + phosphate + CO2. Functionally, inorganic pyrophosphate (PPi)-dependent phosphoenolpyruvate carboxykinase, which regulates the carbon flow of the central metabolism by fixing CO(2) to phosphoenolpyruvate to produce oxaloacetate. Can also produce pyruvate and diphosphate from phosphoenolpyruvate and phosphate. The chain is PPi-type phosphoenolpyruvate carboxykinase 3 from Entamoeba histolytica (strain ATCC 30459 / HM-1:IMSS / ABRM).